We begin with the raw amino-acid sequence, 462 residues long: Anthranilate synthase component 1 (462 aa).

L-tryptophan contacts are provided by residues Ser-37 and 244–246; that span reads PYM. 279 to 280 contributes to the chorismate binding site; it reads GT. A Mg(2+)-binding site is contributed by Glu-306. Residues Tyr-394, Arg-414, 428–430, and Gly-430 each bind chorismate; that span reads GAG. Residue Glu-443 participates in Mg(2+) binding.

Belongs to the anthranilate synthase component I family. In terms of assembly, heterotetramer consisting of two non-identical subunits: a beta subunit (TrpG) and a large alpha subunit (TrpE). Mg(2+) serves as cofactor.

The catalysed reaction is chorismate + L-glutamine = anthranilate + pyruvate + L-glutamate + H(+). The protein operates within amino-acid biosynthesis; L-tryptophan biosynthesis; L-tryptophan from chorismate: step 1/5. With respect to regulation, feedback inhibited by tryptophan. Functionally, part of a heterotetrameric complex that catalyzes the two-step biosynthesis of anthranilate, an intermediate in the biosynthesis of L-tryptophan. In the first step, the glutamine-binding beta subunit (TrpG) of anthranilate synthase (AS) provides the glutamine amidotransferase activity which generates ammonia as a substrate that, along with chorismate, is used in the second step, catalyzed by the large alpha subunit of AS (TrpE) to produce anthranilate. In the absence of TrpG, TrpE can synthesize anthranilate directly from chorismate and high concentrations of ammonia. The polypeptide is Anthranilate synthase component 1 (trpE) (Thermus thermophilus (strain ATCC 27634 / DSM 579 / HB8)).